The primary structure comprises 464 residues: ATP synthase subunit beta (464 aa).

Position 153-160 (153-160) interacts with ATP; that stretch reads GGAGVGKT.

This sequence belongs to the ATPase alpha/beta chains family. As to quaternary structure, F-type ATPases have 2 components, CF(1) - the catalytic core - and CF(0) - the membrane proton channel. CF(1) has five subunits: alpha(3), beta(3), gamma(1), delta(1), epsilon(1). CF(0) has three main subunits: a(1), b(2) and c(9-12). The alpha and beta chains form an alternating ring which encloses part of the gamma chain. CF(1) is attached to CF(0) by a central stalk formed by the gamma and epsilon chains, while a peripheral stalk is formed by the delta and b chains.

It is found in the cell inner membrane. The catalysed reaction is ATP + H2O + 4 H(+)(in) = ADP + phosphate + 5 H(+)(out). Functionally, produces ATP from ADP in the presence of a proton gradient across the membrane. The catalytic sites are hosted primarily by the beta subunits. This Burkholderia vietnamiensis (strain G4 / LMG 22486) (Burkholderia cepacia (strain R1808)) protein is ATP synthase subunit beta.